Reading from the N-terminus, the 525-residue chain is UPF0288 protein MA_3997 (525 aa).

It belongs to the UPF0288 family.

The chain is UPF0288 protein MA_3997 from Methanosarcina acetivorans (strain ATCC 35395 / DSM 2834 / JCM 12185 / C2A).